Consider the following 394-residue polypeptide: Phosphoglycerate kinase (394 aa).

Residues 21 to 23, Arg-36, 59 to 62, Arg-118, and Arg-151 contribute to the substrate site; these read DFN and HLGR. Ser-183 carries the phosphoserine modification. ATP is bound by residues Lys-201 and Gly-292. At Thr-299 the chain carries Phosphothreonine. Residues Glu-323 and 350–353 each bind ATP; that span reads GGDS.

This sequence belongs to the phosphoglycerate kinase family. In terms of assembly, monomer.

It localises to the cytoplasm. The catalysed reaction is (2R)-3-phosphoglycerate + ATP = (2R)-3-phospho-glyceroyl phosphate + ADP. The protein operates within carbohydrate degradation; glycolysis; pyruvate from D-glyceraldehyde 3-phosphate: step 2/5. This is Phosphoglycerate kinase from Bacillus thuringiensis (strain Al Hakam).